Consider the following 3763-residue polypeptide: Colossin-B (3763 aa).

The first 19 residues, 1 to 19 (MKGSIFLLFIFQIFKFSSS), serve as a signal peptide directing secretion. Residues Asn43, Asn110, Asn258, and Asn284 are each glycosylated (N-linked (GlcNAc...) asparagine). A Follistatin-like 1 domain is found at 619–643 (DCSTLQCPSGYECKLDKNSKTRGCI). N-linked (GlcNAc...) asparagine glycans are attached at residues Asn652 and Asn672. Follistatin-like domains lie at 701–724 (HCRN…PRCF) and 729–752 (PCEF…AKCF). Residues 792-832 (PPIFYETPSPTSAPPTETPSPTDTPTDKPTIPPTPTPTPSK) form a disordered region. Residues 810 to 820 (PSPTDTPTDKP) are compositionally biased toward low complexity. 2 N-linked (GlcNAc...) asparagine glycosylation sites follow: Asn845 and Asn991. Disordered regions lie at residues 1033 to 1068 (LGSS…SESS) and 1095 to 1124 (PQPT…PTST). The span at 1036–1051 (SGSGSSGNSGSSGSGG) shows a compositional bias: gly residues. Composition is skewed to low complexity over residues 1052–1068 (SSND…SESS) and 1099–1124 (PSTD…PTST). Asn1054 carries an N-linked (GlcNAc...) asparagine glycan. One can recognise a CNA-B 1 domain in the interval 1159–1227 (VSGVEITLIQ…LLNKYPIDTS (69 aa)). N-linked (GlcNAc...) asparagine glycosylation is found at Asn1229 and Asn1247. The 70-residue stretch at 1304-1373 (IKGIQVTLKD…VYTMDTFQLS (70 aa)) folds into the CNA-B 2 domain. Residue Asn1381 is glycosylated (N-linked (GlcNAc...) asparagine). 3 CNA-B domains span residues 1437–1515 (LPGV…IDTK), 1582–1648 (VPGI…LTLD), and 1731–1809 (VGGV…FTLS). Asn1769 and Asn1815 each carry an N-linked (GlcNAc...) asparagine glycan. The tract at residues 1883 to 1955 (GSTVDGGTSV…SEQPPEDSME (73 aa)) is disordered. A compositionally biased stretch (low complexity) spans 1898-1948 (STSTTTVSSSPSSSSDIGSSSDISSEVSSSLSSSPSSSEQPSEQSSSSSEQ). A CNA-B 6 domain is found at 2015-2083 (VPDVTVTLVN…DPLSGKIDFN (69 aa)). Residues Asn2128, Asn2145, Asn2243, Asn2294, Asn2351, Asn2378, Asn2453, Asn2493, Asn2496, Asn2516, Asn2572, Asn2601, Asn2624, Asn2668, Asn2698, Asn2714, Asn2781, Asn2787, Asn2800, Asn2838, and Asn2858 are each glycosylated (N-linked (GlcNAc...) asparagine). One can recognise a CNA-B 7 domain in the interval 2143-2197 (FPNITVRLFDQNLQPVLDNFNIQVEPTVTNALGQYYFDNLHSGSYIVKFEVPTRY). Positions 2292 to 2345 (VPNVTVEIFNPTGQQVYNINELLIGSTTTDSNGYYLFDEIQPGSYIIKFSNIPN) constitute a CNA-B 8 domain. In terms of domain architecture, CNA-B 9 spans 2453-2477 (NTTTTDQNGLYYFDNLSPGLYKLLF). One can recognise a CNA-B 10 domain in the interval 2713–2766 (VNGTIVTLLDINGNTMVDADSYPINSYTTGPDGYYKFDDFSFGKYIITFSGVPD). Residues 2984–3061 (LGGVVVTLYN…DSNASPVDGY (78 aa)) form the CNA-B 11 domain. N-linked (GlcNAc...) asparagine glycans are attached at residues Asn3083, Asn3130, Asn3372, Asn3390, Asn3459, Asn3466, Asn3557, Asn3666, Asn3676, and Asn3681. The CNA-B 12 domain occupies 3128-3201 (YPNITVSIYT…TKTGVNLGII (74 aa)). Positions 3664 to 3733 (MANITVQLFS…NDKRDLEKIN (70 aa)) constitute a CNA-B 13 domain.

This sequence belongs to the serine-aspartate repeat-containing protein (SDr) family.

It is found in the secreted. The sequence is that of Colossin-B (colB) from Dictyostelium discoideum (Social amoeba).